Consider the following 259-residue polypeptide: Ubiquitin-conjugating enzyme E2 J2 (259 aa).

Over 1–226 the chain is Cytoplasmic; that stretch reads MSNNSNKRAP…AGLPQANRHH (226 aa). The UBC core domain maps to 12 to 162; the sequence is TATQRLKQDY…DKVFCELFPE (151 aa). Cys94 serves as the catalytic Glycyl thioester intermediate. Residues 227-247 traverse the membrane as a helical; Anchor for type IV membrane protein segment; sequence GLLGGALANLFVIVGFAAFAY. The Lumenal segment spans residues 248–259; the sequence is TVKYVLRSIAQE.

It belongs to the ubiquitin-conjugating enzyme family. As to quaternary structure, interacts with murid herpesvirus 4 protein K3 (mK3).

The protein localises to the endoplasmic reticulum membrane. It carries out the reaction S-ubiquitinyl-[E1 ubiquitin-activating enzyme]-L-cysteine + [E2 ubiquitin-conjugating enzyme]-L-cysteine = [E1 ubiquitin-activating enzyme]-L-cysteine + S-ubiquitinyl-[E2 ubiquitin-conjugating enzyme]-L-cysteine.. Its pathway is protein modification; protein ubiquitination. Functionally, catalyzes the covalent attachment of ubiquitin to other proteins. Seems to function in the selective degradation of misfolded membrane proteins from the endoplasmic reticulum (ERAD). In cooperation with the GATOR2 complex, catalyzes 'Lys-6'-linked ubiquitination of NPRL2. Its function is as follows. In case of infection by the murid herpesvirus 4, its association with the viral E3 ligase K3 mediates ubiquitination of host surface class I (MHC-I) H-2D(b)/H2-D1 and H-2K(b)/H2-K1 molecules before they exit the endoplasmic reticulum, leading to their degradation by the ERAD system, thus blocking the immune detection of virus-infected cells. The complex formed with the murid herpesvirus 4 protein K3 mediates ubiquitination of lysine, as well as serine and threonine residues present in the cytoplasmic tail of surface class I molecules and promotes ubiquitination of hydroxylated serine or threonine residues via ester bonds instead of the classical isopeptide linkage. This Mus musculus (Mouse) protein is Ubiquitin-conjugating enzyme E2 J2 (Ube2j2).